The sequence spans 699 residues: Chitinase A1 (699 aa).

Positions 1–41 are cleaved as a signal peptide; that stretch reads MINLNKHTAFKKTAKFFLGLSLLLSVIVPSFALQPATAEAA. One can recognise a GH18 domain in the interval 44–454; it reads YKIVGYYPSW…NKLKADLPTG (411 aa). Chitin-binding positions include 135-136 and 162-165; these read DQ and GGWT. The Proton donor role is filled by Glu-204. Residues Tyr-205, 277 to 280, and Trp-433 contribute to the chitin site; that span reads MTYD. The segment at 449 to 471 is disordered; it reads ADLPTGGTVPPVDTTAPSVPGNA. A compositionally biased stretch (low complexity) spans 452–465; that stretch reads PTGGTVPPVDTTAP. 2 Fibronectin type-III domains span residues 467 to 553 and 562 to 647; these read VPGN…TAQP and APTN…TAAE.

Belongs to the glycosyl hydrolase 18 family. Chitinase class II subfamily.

The catalysed reaction is Random endo-hydrolysis of N-acetyl-beta-D-glucosaminide (1-&gt;4)-beta-linkages in chitin and chitodextrins.. The sequence is that of Chitinase A1 (chiA1) from Niallia circulans (Bacillus circulans).